Reading from the N-terminus, the 294-residue chain is UPF0761 membrane protein YPTS_0028 (294 aa).

7 consecutive transmembrane segments (helical) span residues 44–64 (LLSL…FPMF), 67–87 (ISIK…GDII), 108–128 (GLIV…NIIW), 136–156 (LVFS…LVGA), 185–205 (VFPL…VPTV), 212–232 (ALIG…GFAM), and 246–266 (VLAV…IVLL).

It belongs to the UPF0761 family.

It localises to the cell inner membrane. This is UPF0761 membrane protein YPTS_0028 from Yersinia pseudotuberculosis serotype IB (strain PB1/+).